The chain runs to 967 residues: Mediator of RNA polymerase II transcription subunit 14 (967 aa).

The protein belongs to the Mediator complex subunit 14 family. In terms of assembly, component of the Mediator complex.

The protein resides in the nucleus. Its function is as follows. Component of the Mediator complex, a coactivator involved in the regulated transcription of nearly all RNA polymerase II-dependent genes. Mediator functions as a bridge to convey information from gene-specific regulatory proteins to the basal RNA polymerase II transcription machinery. Mediator is recruited to promoters by direct interactions with regulatory proteins and serves as a scaffold for the assembly of a functional preinitiation complex with RNA polymerase II and the general transcription factors. This Eremothecium gossypii (strain ATCC 10895 / CBS 109.51 / FGSC 9923 / NRRL Y-1056) (Yeast) protein is Mediator of RNA polymerase II transcription subunit 14 (RGR1).